Here is a 200-residue protein sequence, read N- to C-terminus: Cell division protein SepF (200 aa).

Disordered stretches follow at residues 35–60 and 170–200; these read NLYQ…RWRE and LHEV…RMAQ. Positions 183 to 200 are enriched in polar residues; the sequence is PTGSPNQTWGNETNRMAQ.

This sequence belongs to the SepF family. Homodimer. Interacts with FtsZ.

It is found in the cytoplasm. Functionally, cell division protein that is part of the divisome complex and is recruited early to the Z-ring. Probably stimulates Z-ring formation, perhaps through the cross-linking of FtsZ protofilaments. Its function overlaps with FtsA. In Nostoc punctiforme (strain ATCC 29133 / PCC 73102), this protein is Cell division protein SepF.